Reading from the N-terminus, the 218-residue chain is Ropporin-1-like protein (218 aa).

The RIIa domain maps to 17–46 (PELTDILKQFTKAAIRTQPADVLQWSAGYF).

It belongs to the ropporin family. Component of the axonemal radial spoke complex 1 (RS1), at least composed of spoke head proteins RSPH1, RSPH3, RSPH9 and the cilia-specific component RSPH4A or sperm-specific component RSPH6A, spoke stalk proteins RSPH14, DNAJB13, DYDC1, ROPN1L and NME5, and the anchor protein IQUB. May interact with AKAP3. Interacts with FSCB; the interaction increases upon spermatozoa capacitation conditions. Interacts with CFAP61. In terms of processing, sumoylated, sumoylation decreases upon spermatozoa capacitation conditions.

The protein resides in the cell projection. It localises to the cilium. It is found in the flagellum. Functionally, functions as part of axonemal radial spoke complexes that play an important part in the motility of sperm and cilia. Important for male fertility. With ROPN1, involved in fibrous sheath integrity and sperm motility, plays a role in PKA-dependent signaling processes required for spermatozoa capacitation. The protein is Ropporin-1-like protein (ROPN1L) of Bos taurus (Bovine).